The sequence spans 312 residues: Methionyl-tRNA formyltransferase (312 aa).

107–110 (SLLP) is a binding site for (6S)-5,6,7,8-tetrahydrofolate.

This sequence belongs to the Fmt family.

It carries out the reaction L-methionyl-tRNA(fMet) + (6R)-10-formyltetrahydrofolate = N-formyl-L-methionyl-tRNA(fMet) + (6S)-5,6,7,8-tetrahydrofolate + H(+). In terms of biological role, attaches a formyl group to the free amino group of methionyl-tRNA(fMet). The formyl group appears to play a dual role in the initiator identity of N-formylmethionyl-tRNA by promoting its recognition by IF2 and preventing the misappropriation of this tRNA by the elongation apparatus. The chain is Methionyl-tRNA formyltransferase from Endomicrobium trichonymphae.